A 360-amino-acid chain; its full sequence is Probable arginine kinase ZC434.8 (360 aa).

Residues 10–92 (SIEEVYTKLQ…FNPVIEEYHN (83 aa)) form the Phosphagen kinase N-terminal domain. 65–69 (GVGIY) provides a ligand contact to substrate. The region spanning 122–359 (FIVSTRIRCG…KKLIELEKAA (238 aa)) is the Phosphagen kinase C-terminal domain. Residues 125 to 129 (STRIR) and H189 contribute to the ATP site. A substrate-binding site is contributed by E229. R233 lines the ATP pocket. C275 lines the substrate pocket. ATP-binding positions include 284–288 (RASVH), 312–317 (RGIHGE), and D327. E317 lines the substrate pocket.

It belongs to the ATP:guanido phosphotransferase family.

It catalyses the reaction L-arginine + ATP = N(omega)-phospho-L-arginine + ADP + H(+). This is Probable arginine kinase ZC434.8 from Caenorhabditis elegans.